The primary structure comprises 620 residues: Chaperone protein HscA homolog (620 aa).

It belongs to the heat shock protein 70 family.

In terms of biological role, chaperone involved in the maturation of iron-sulfur cluster-containing proteins. Has a low intrinsic ATPase activity which is markedly stimulated by HscB. The polypeptide is Chaperone protein HscA homolog (Shewanella baltica (strain OS195)).